The following is a 245-amino-acid chain: Ribonuclease PH (245 aa).

Residues Arg-86 and 124–126 each bind phosphate; that span reads GTR.

The protein belongs to the RNase PH family. Homohexameric ring arranged as a trimer of dimers.

It carries out the reaction tRNA(n+1) + phosphate = tRNA(n) + a ribonucleoside 5'-diphosphate. In terms of biological role, phosphorolytic 3'-5' exoribonuclease that plays an important role in tRNA 3'-end maturation. Removes nucleotide residues following the 3'-CCA terminus of tRNAs; can also add nucleotides to the ends of RNA molecules by using nucleoside diphosphates as substrates, but this may not be physiologically important. Probably plays a role in initiation of 16S rRNA degradation (leading to ribosome degradation) during starvation. The sequence is that of Ribonuclease PH from Bacillus cereus (strain ATCC 10987 / NRS 248).